A 182-amino-acid polypeptide reads, in one-letter code: Ribosome-recycling factor (182 aa).

Belongs to the RRF family.

It is found in the cytoplasm. Functionally, responsible for the release of ribosomes from messenger RNA at the termination of protein biosynthesis. May increase the efficiency of translation by recycling ribosomes from one round of translation to another. This is Ribosome-recycling factor from Prochlorococcus marinus (strain MIT 9515).